The primary structure comprises 279 residues: Shikimate dehydrogenase (NADP(+)) (279 aa).

Residues 20–22 and Thr-67 contribute to the shikimate site; that span reads SRS. Lys-71 functions as the Proton acceptor in the catalytic mechanism. Residue Asp-83 participates in NADP(+) binding. The shikimate site is built by Asn-92 and Asp-108. Residues 134–138 and Leu-223 contribute to the NADP(+) site; that span reads GAGGA. Tyr-225 is a binding site for shikimate. Gly-246 is an NADP(+) binding site.

Belongs to the shikimate dehydrogenase family. Homodimer.

It catalyses the reaction shikimate + NADP(+) = 3-dehydroshikimate + NADPH + H(+). Its pathway is metabolic intermediate biosynthesis; chorismate biosynthesis; chorismate from D-erythrose 4-phosphate and phosphoenolpyruvate: step 4/7. In terms of biological role, involved in the biosynthesis of the chorismate, which leads to the biosynthesis of aromatic amino acids. Catalyzes the reversible NADPH linked reduction of 3-dehydroshikimate (DHSA) to yield shikimate (SA). The polypeptide is Shikimate dehydrogenase (NADP(+)) (Cereibacter sphaeroides (strain ATCC 17023 / DSM 158 / JCM 6121 / CCUG 31486 / LMG 2827 / NBRC 12203 / NCIMB 8253 / ATH 2.4.1.) (Rhodobacter sphaeroides)).